The following is a 255-amino-acid chain: 5-oxoprolinase subunit A (255 aa).

The protein belongs to the LamB/PxpA family. In terms of assembly, forms a complex composed of PxpA, PxpB and PxpC.

The catalysed reaction is 5-oxo-L-proline + ATP + 2 H2O = L-glutamate + ADP + phosphate + H(+). Catalyzes the cleavage of 5-oxoproline to form L-glutamate coupled to the hydrolysis of ATP to ADP and inorganic phosphate. This Campylobacter jejuni subsp. jejuni serotype O:6 (strain 81116 / NCTC 11828) protein is 5-oxoprolinase subunit A.